The sequence spans 124 residues: Flagellar transcriptional regulator FlhD (124 aa).

The protein belongs to the FlhD family. As to quaternary structure, homodimer; disulfide-linked. Forms a heterohexamer composed of two FlhC and four FlhD subunits. Each FlhC binds a FlhD dimer, forming a heterotrimer, and a hexamer assembles by dimerization of two heterotrimers.

The protein localises to the cytoplasm. In terms of biological role, functions in complex with FlhC as a master transcriptional regulator that regulates transcription of several flagellar and non-flagellar operons by binding to their promoter region. Activates expression of class 2 flagellar genes, including fliA, which is a flagellum-specific sigma factor that turns on the class 3 genes. Also regulates genes whose products function in a variety of physiological pathways. This chain is Flagellar transcriptional regulator FlhD, found in Pectobacterium carotovorum (Erwinia carotovora).